The chain runs to 392 residues: Protein Wnt-1 (392 aa).

Residues 1-16 (MKCLWLLVITVLCLRC) form the signal peptide. 11 disulfides stabilise this stretch: cysteine 89-cysteine 100, cysteine 142-cysteine 150, cysteine 152-cysteine 179, cysteine 227-cysteine 241, cysteine 229-cysteine 236, cysteine 321-cysteine 352, cysteine 337-cysteine 347, cysteine 351-cysteine 391, cysteine 367-cysteine 382, cysteine 369-cysteine 379, and cysteine 374-cysteine 375. Asparagine 99 carries an N-linked (GlcNAc...) asparagine glycan. Residue serine 233 is the site of O-palmitoleoyl serine; by PORCN attachment. 2 N-linked (GlcNAc...) asparagine glycosylation sites follow: asparagine 338 and asparagine 368.

This sequence belongs to the Wnt family. In terms of processing, palmitoleoylated by porcupine. The lipid group functions as a sorting signal, targeting the ligand to polarized vesicles that transport WNT-1 to unique sites at the cell surface. Depalmitoleoylated by notum, leading to inhibit Wnt signaling pathway.

The protein localises to the secreted. It is found in the extracellular space. Its subcellular location is the extracellular matrix. In terms of biological role, ligand for members of the frizzled family of seven transmembrane receptors. Probable developmental protein. In Bombyx mori (Silk moth), this protein is Protein Wnt-1 (WNT-1).